Consider the following 133-residue polypeptide: UPF0102 protein Anae109_1947 (133 aa).

It belongs to the UPF0102 family.

This Anaeromyxobacter sp. (strain Fw109-5) protein is UPF0102 protein Anae109_1947.